The following is a 118-amino-acid chain: Eukaryotic translation initiation factor 4E-binding protein 1 (118 aa).

Composition is skewed to polar residues over residues 1–12 (MSGGSSCSQTPS) and 34–48 (YSTT…TTPG). Disordered stretches follow at residues 1-20 (MSGG…ATRR) and 25-48 (DGVQ…TTPG). Serine 2 carries the N-acetylserine modification. Threonine 37 carries the post-translational modification Phosphothreonine; by MTOR. Threonine 41 is modified (phosphothreonine). Serine 44 carries the post-translational modification Phosphoserine. The residue at position 46 (threonine 46) is a Phosphothreonine; by MTOR. Threonine 50 carries the post-translational modification Phosphothreonine. Residue tyrosine 54 is modified to Phosphotyrosine. A YXXXXLphi motif motif is present at residues 54 to 60 (YDRKFLM). Lysine 57 is covalently cross-linked (Glycyl lysine isopeptide (Lys-Gly) (interchain with G-Cter in ubiquitin)). The segment at 64 to 118 (NSPVTKTPPRDLPTIPGVTSPSSDEPPMEASQSHLRNSPEDKRAGGEESQFEMDI) is disordered. Serine 65 carries the phosphoserine; by DYRK2, MAPK1, MAPK3 and MTOR modification. Threonine 70 bears the Phosphothreonine; by MTOR mark. At threonine 77 the chain carries Phosphothreonine. 2 positions are modified to phosphoserine: serine 83 and serine 96. Residues 100–109 (NSPEDKRAGG) are compositionally biased toward basic and acidic residues. Serine 101 is subject to Phosphoserine; by DYRK2. Position 112 is a phosphoserine (serine 112). The TOS motif signature appears at 114-118 (FEMDI).

The protein belongs to the eIF4E-binding protein family. Hypophosphorylated EIF4EBP1 competes with EIF4G1/EIF4G3 to interact with EIF4E; insulin stimulated MAP-kinase (MAPK1 and MAPK3) or mTORC1 phosphorylation of EIF4EBP1 causes dissociation of the complex allowing EIF4G1/EIF4G3 to bind and consequent initiation of translation. Interacts (via TOS motif) with RPTOR; promoting phosphorylation by mTORC1. In terms of processing, phosphorylated on serine and threonine residues in response to insulin, EGF and PDGF. Phosphorylation at Thr-37, Thr-46, Ser-65 and Thr-70, corresponding to the hyperphosphorylated form, is regulated by mTORC1 and abolishes binding to EIF4E. Post-translationally, ubiquitinated: when eIF4E levels are low, hypophosphorylated form is ubiquitinated by the BCR(KLHL25) complex, leading to its degradation and serving as a homeostatic mechanism to maintain translation and prevent eIF4E inhibition when eIF4E levels are low. Not ubiquitinated when hyperphosphorylated (at Thr-37, Thr-46, Ser-65 and Thr-70) or associated with eIF4E.

The protein localises to the cytoplasm. The protein resides in the nucleus. Its function is as follows. Repressor of translation initiation that regulates EIF4E activity by preventing its assembly into the eIF4F complex: hypophosphorylated form competes with EIF4G1/EIF4G3 and strongly binds to EIF4E, leading to repress translation. In contrast, hyperphosphorylated form dissociates from EIF4E, allowing interaction between EIF4G1/EIF4G3 and EIF4E, leading to initiation of translation. Mediates the regulation of protein translation by hormones, growth factors and other stimuli that signal through the MAP kinase and mTORC1 pathways. This is Eukaryotic translation initiation factor 4E-binding protein 1 (EIF4EBP1) from Homo sapiens (Human).